Consider the following 88-residue polypeptide: Stannin (88 aa).

Topologically, residues 1 to 10 are mitochondrial intermembrane; sequence MSIMDHSPTT. The chain crosses the membrane as a helical span at residues 11–31; sequence GVVTVIVILIAIAALGALILG. The Cytoplasmic portion of the chain corresponds to 32–88; that stretch reads CWCYLRLQRISQSEDEESIVGDGETKEPFLLVQYSAKGPCVERKAKLMTPNGPEVHG. Phosphoserine is present on serine 49.

Belongs to the stannin family. Monomer.

It localises to the mitochondrion outer membrane. Functionally, plays a role in the toxic effects of organotins. Plays a role in endosomal maturation. The chain is Stannin (SNN) from Homo sapiens (Human).